The following is a 784-amino-acid chain: LPS-assembly protein LptD (784 aa).

An N-terminal signal peptide occupies residues M1–A24. Intrachain disulfides connect C31–C724 and C173–C725.

The protein belongs to the LptD family. In terms of assembly, component of the lipopolysaccharide transport and assembly complex. Interacts with LptE and LptA. May interact with LptE during assembly of LptD by the beta-barrel assembly machine (BAM). Also interacts with LptM, which promotes the efficient assembly of the LptDE translocon by the BAM complex. Post-translationally, contains two intramolecular disulfide bonds. At least one disulfide bond is required for activity, and protein is probably fully oxidized in vivo.

The protein resides in the cell outer membrane. Its function is as follows. Together with LptE, is involved in the assembly of lipopolysaccharide (LPS) at the surface of the outer membrane. Contributes to n-hexane resistance. The protein is LPS-assembly protein LptD of Escherichia coli (strain K12).